The chain runs to 455 residues: MVRLFGTDGVRGVANIDLTAEQALSLASAAVEVLAGPNRTSGPSGRGKPVVVVGRDTRPSGEFLEAAVVAGLAASGADVARIGVAPTPAVAHAVAASGAMFGVMLSASHNPMPDNGIKLFAAGGLKLPDEVEDAIERRMALPPSRRPVGADVGRVRDEPVLLDRYAAHLLATLPVPLDGLRVVVDCAQGAASTLAPRVLRAAGADVVALHADGDGIAINDGSGATHLDSLRAAVVAHGADVGIAHDGDADRCLAVDATGEVVDGDQILAMCALALAERGELVDDTVVVTVMSNLGFHHAMREAGITVVTTPVGDRYVLETMRAGGYVLGGEQSGHVVFLDHATTGDGLLTALRILGRVAETGQPLGELTKAMTRLPQVLVNVRGVDRTQVDTNEELLRAVALAKAELGDEGRVLLRSSGTEPLVRVMVEAGTDAAARAVAQRLAAVVRTALPPAR.

Ser-108 acts as the Phosphoserine intermediate in catalysis. Residues Ser-108, Asp-246, Asp-248, and Asp-250 each coordinate Mg(2+). Ser-108 is modified (phosphoserine).

It belongs to the phosphohexose mutase family. Requires Mg(2+) as cofactor. Post-translationally, activated by phosphorylation.

It catalyses the reaction alpha-D-glucosamine 1-phosphate = D-glucosamine 6-phosphate. Functionally, catalyzes the conversion of glucosamine-6-phosphate to glucosamine-1-phosphate. This Frankia casuarinae (strain DSM 45818 / CECT 9043 / HFP020203 / CcI3) protein is Phosphoglucosamine mutase.